The chain runs to 357 residues: DNA replication and repair protein RecF (357 aa).

30 to 37 (GPNGSGKT) provides a ligand contact to ATP.

It belongs to the RecF family.

Its subcellular location is the cytoplasm. Functionally, the RecF protein is involved in DNA metabolism; it is required for DNA replication and normal SOS inducibility. RecF binds preferentially to single-stranded, linear DNA. It also seems to bind ATP. The protein is DNA replication and repair protein RecF of Vibrio campbellii (strain ATCC BAA-1116).